Reading from the N-terminus, the 329-residue chain is Vomeronasal type-1 receptor 43 (329 aa).

Residues 1 to 32 are Extracellular-facing; it reads MSKILFFSPCSLFSHTMNKNSRLHTNSNIGNT. Residues 33–53 traverse the membrane as a helical segment; sequence FFSEIGIGITGNSFLLLYHIL. At 54–65 the chain is on the cytoplasmic side; sequence KFIRGHRPRLTD. A helical transmembrane segment spans residues 66–86; the sequence is LPIGLLSLIHLLMLLVAAFIA. The Extracellular segment spans residues 87–109; it reads TDIFISRRGWDDIICKFLVYLYR. A disulfide bond links cysteine 101 and cysteine 188. The chain crosses the membrane as a helical span at residues 110-130; sequence VLRGLSLCTTSMLSVLQAIIL. Topologically, residues 131 to 147 are cytoplasmic; sequence SPRSSCLSKFKHISLHH. The helical transmembrane segment at 148-168 threads the bilayer; that stretch reads ILCAILFLSVLYMLISSQLLV. Over 169-209 the chain is Extracellular; that stretch reads SIIATPNLTTNDLTYVTQSCSILPLSYLVESINSTLLAIRE. Residues asparagine 175 and asparagine 201 are each glycosylated (N-linked (GlcNAc...) asparagine). A helical transmembrane segment spans residues 210–230; sequence YFLISLMFLSTWYIVALLCMH. Over 231-255 the chain is Cytoplasmic; sequence RKQTQHLQETRLSLKKSPEQSATQT. The helical transmembrane segment at 256-276 threads the bilayer; that stretch reads ILMLMTFFVLMTIYDNIVSCL. At 277–285 the chain is on the extracellular side; the sequence is RTMLLNDPT. Residues 286-306 form a helical membrane-spanning segment; it reads SYSIELFMIHIYATVSPFVFM. Residues 307-329 lie on the Cytoplasmic side of the membrane; that stretch reads SNEKHIVNFLRSMGKRMINLNLH.

The protein belongs to the G-protein coupled receptor 1 family.

The protein resides in the cell membrane. In terms of biological role, putative pheromone receptor implicated in the regulation of social and reproductive behavior. This Mus musculus (Mouse) protein is Vomeronasal type-1 receptor 43 (Vmn1r43).